The sequence spans 86 residues: Small muscular protein (86 aa).

Positions Met-20–Pro-64 are disordered.

This sequence belongs to the SMPX family.

Functionally, plays a role in the regulatory network through which muscle cells coordinate their structural and functional states during growth, adaptation, and repair. This is Small muscular protein (SMPX) from Pongo abelii (Sumatran orangutan).